Reading from the N-terminus, the 770-residue chain is Rho guanine nucleotide exchange factor 38 (770 aa).

Positions 33–88 are disordered; sequence KTDTVVDSSVSGDHSGSLRRSQSDRTEYNQKLQEKMTPQAECSSAETPTPEDEQQV. Phosphothreonine is present on Thr34. The span at 37-47 shows a compositional bias: low complexity; that stretch reads VVDSSVSGDHS. Positions 53–66 are enriched in basic and acidic residues; that stretch reads SQSDRTEYNQKLQE. A DH domain is found at 94–285; that stretch reads KRAKIIRELI…KDINVNINEL (192 aa). Residues 327-542 form the BAR domain; it reads LKILTRGESQ…VHSLTFVKEN (216 aa). SH3 domains are found at residues 581-644 and 706-769; these read GAEE…PHNP and VDEQ…KMTY.

May act as a guanine-nucleotide releasing factor. The polypeptide is Rho guanine nucleotide exchange factor 38 (Arhgef38) (Mus musculus (Mouse)).